Reading from the N-terminus, the 394-residue chain is MSLKMMERLSTDMDGTRDVASPPARQDAAEPERTVELSGVKEGAAPNSPPRAVPVIELLRRGEGLGNIKAREQELRLQNIRTTELCRATLTPATELCRAPLTPTTELCRAPLTPTTELCRAPLTPTTELCRPPLTPAAEFCRASLTPASELCRAPSSVTGPSLTATTELCRPPIPLPTPSTGPPAEQAVEARMVQLSPTASLPLQAAGRTMLYGLNQPLASDNSGYFGDPDTFPMYTSNSRAKRRPGPIEVEISEGPQPKVVRRIFTNSRERWRQQNVNGAFAELRKLIPTHPPDKKLSKNEILRLAMKYINFLAKLLDDQEEEGNQRNKGNKDNGMVQQELLQDMLSPNSSCGSSLDGAPSPDSYSEEHDALDSKHSRNLHQAMLPIDGSGQR.

A compositionally biased stretch (basic and acidic residues) spans 1-17 (MSLKMMERLSTDMDGTR). Positions 1-49 (MSLKMMERLSTDMDGTRDVASPPARQDAAEPERTVELSGVKEGAAPNSP) are disordered. A run of 7 repeats spans residues 83 to 89 (TELCRAT), 94 to 100 (TELCRAP), 105 to 111 (TELCRAP), 116 to 122 (TELCRAP), 127 to 133 (TELCRPP), 149 to 155 (SELCRAP), and 167 to 173 (TELCRPP). A 7 X 7 AA approximate repeats of [TS]-E-L-C-R-[AP]-P region spans residues 83 to 173 (TELCRATLTP…TATTELCRPP (91 aa)). In terms of domain architecture, bHLH spans 262-314 (VRRIFTNSRERWRQQNVNGAFAELRKLIPTHPPDKKLSKNEILRLAMKYINFL). The interval 347 to 394 (LSPNSSCGSSLDGAPSPDSYSEEHDALDSKHSRNLHQAMLPIDGSGQR) is disordered. The span at 367–377 (SEEHDALDSKH) shows a compositional bias: basic and acidic residues.

First expressed in patches on the ventral side of the embryo in a region that will give rise to hematopoietic tissue. By late neurula stages, expressed throughout the ventral blood island region. By tailbud stages, expression extends to probable vascular progenitor cells, but is excluded from the presumptive liver anlage. Also expressed in the central nervous system at the tailbud stage.

It is found in the nucleus. Functionally, transcription factor that acts synergistically with lmo2 and gata1 to specify embryonic dorsal mesoderm to a hematopoietic fate. This is T-cell acute lymphocytic leukemia protein 1 from Xenopus laevis (African clawed frog).